Here is a 142-residue protein sequence, read N- to C-terminus: Hemoglobin subunit alpha (142 aa).

In terms of domain architecture, Globin spans 2–142 (VLSSQNKKAI…VAYELSSCYR (141 aa)). Residue His-60 coordinates O2. His-89 provides a ligand contact to heme b.

The protein belongs to the globin family. As to quaternary structure, heterotetramer of two alpha chains and two beta chains. As to expression, red blood cells.

In terms of biological role, involved in oxygen transport from gills to the various peripheral tissues. In Hemitrygon akajei (Red stingray), this protein is Hemoglobin subunit alpha (hba).